Reading from the N-terminus, the 255-residue chain is Testis-specific H1 histone (255 aa).

Positions 1-54 are disordered; it reads MEQALTGEAQSRWPRRGGSGAMAEAPGPSGESRGHSATQLPAEKTVGGPSRGCS. Ser56 carries the post-translational modification Phosphoserine. Residues 124–134 show a composition bias toward basic residues; it reads KVPKPRRKPGR. The interval 124 to 255 is disordered; it reads KVPKPRRKPG…PKKPAQRTIQ (132 aa). Low complexity predominate over residues 142-152; it reads RAPWRTPAAPR. Composition is skewed to basic residues over residues 153–166 and 174–194; these read SSRRRRQPLRKAAR and RNARAKAKANARARRTRRARP. Basic and acidic residues-rich tracts occupy residues 195 to 230 and 238 to 248; these read RAKEPPCARAKEEAGATAADEGRGQAVKEDTTPRSG and KPREEKQEPKK.

It belongs to the histone H1/H5 family. In terms of tissue distribution, testis-specific.

It localises to the nucleus. Its subcellular location is the chromosome. Its function is as follows. Essential for normal spermatogenesis and male fertility. Required for proper cell restructuring and DNA condensation during the elongation phase of spermiogenesis. Involved in the histone-protamine transition of sperm chromatin and the subsequent production of functional sperm. Binds both double-stranded and single-stranded DNA, ATP and protamine-1. The chain is Testis-specific H1 histone from Homo sapiens (Human).